The chain runs to 425 residues: CinA-like protein (425 aa).

The protein belongs to the CinA family.

The polypeptide is CinA-like protein (Shewanella sp. (strain ANA-3)).